We begin with the raw amino-acid sequence, 483 residues long: UDP-N-acetylmuramoyl-L-alanyl-D-glutamate--2,6-diaminopimelate ligase (483 aa).

Position 30 (Ser-30) interacts with UDP-N-acetyl-alpha-D-muramoyl-L-alanyl-D-glutamate. Residue 109 to 115 (GTNGKTT) participates in ATP binding. Residues 151–152 (TT), Ser-178, and Arg-186 each bind UDP-N-acetyl-alpha-D-muramoyl-L-alanyl-D-glutamate. Residue Lys-218 is modified to N6-carboxylysine. Residues Arg-380, 403 to 406 (DNPR), Gly-453, and Glu-457 contribute to the meso-2,6-diaminopimelate site. The short motif at 403 to 406 (DNPR) is the Meso-diaminopimelate recognition motif element.

The protein belongs to the MurCDEF family. MurE subfamily. It depends on Mg(2+) as a cofactor. Post-translationally, carboxylation is probably crucial for Mg(2+) binding and, consequently, for the gamma-phosphate positioning of ATP.

The protein resides in the cytoplasm. The enzyme catalyses UDP-N-acetyl-alpha-D-muramoyl-L-alanyl-D-glutamate + meso-2,6-diaminopimelate + ATP = UDP-N-acetyl-alpha-D-muramoyl-L-alanyl-gamma-D-glutamyl-meso-2,6-diaminopimelate + ADP + phosphate + H(+). The protein operates within cell wall biogenesis; peptidoglycan biosynthesis. Functionally, catalyzes the addition of meso-diaminopimelic acid to the nucleotide precursor UDP-N-acetylmuramoyl-L-alanyl-D-glutamate (UMAG) in the biosynthesis of bacterial cell-wall peptidoglycan. The protein is UDP-N-acetylmuramoyl-L-alanyl-D-glutamate--2,6-diaminopimelate ligase of Chlamydia pneumoniae (Chlamydophila pneumoniae).